Reading from the N-terminus, the 594-residue chain is Nucleolar protein 56 (594 aa).

Residues Lys-87, Lys-230, and Lys-240 each participate in a glycyl lysine isopeptide (Lys-Gly) (interchain with G-Cter in SUMO2) cross-link. In terms of domain architecture, Nop spans 292-410; that stretch reads VAPSLSALIG…VEERLSFYET (119 aa). The residue at position 314 (Ser-314) is a Phosphoserine. An Omega-N-methylarginine modification is found at Arg-359. Low complexity-rich tracts occupy residues 458–469 and 488–504; these read ALASSENSSSTP and QEVP…ISFS. The disordered stretch occupies residues 458–594; sequence ALASSENSSS…KKFHKASQED (137 aa). A phosphoserine mark is found at Ser-466 and Ser-467. Thr-468 is modified (phosphothreonine). A phosphoserine mark is found at Ser-511, Ser-519, Ser-520, and Ser-537. A Glycyl lysine isopeptide (Lys-Gly) (interchain with G-Cter in SUMO2) cross-link involves residue Lys-540. The residue at position 561 (Lys-561) is an N6-acetyllysine. At Ser-563 the chain carries Phosphoserine. Lys-564 is covalently cross-linked (Glycyl lysine isopeptide (Lys-Gly) (interchain with G-Cter in SUMO2)). Ser-569, Ser-570, Ser-579, and Ser-581 each carry phosphoserine. Residues 580-594 show a composition bias toward basic residues; the sequence is SSKKKKKFHKASQED.

The protein belongs to the NOP5/NOP56 family. Part of a large pre-ribosomal ribonucleoprotein (RNP) complex, that consists of at least 62 ribosomal proteins, 45 nonribosomal proteins and both pre-rRNA and mature rRNA species. Within this complex directly interacts with TCOF1 in an RNA-independent manner. Core component of box C/D small nucleolar ribonucleoprotein (snoRNP) particles; the core proteins SNU13, NOP56, NOP58 and FBL or FBLL1 assemble stepwise onto the snoRNA. Interacts with NOP1 and NOP58. Interacts with NUFIP1, RUVBL1 and RUVBL2; RUVBL1:RUVBL2 seem to bridge the association of NOP56 with NUFIP1. Part of the small subunit (SSU) processome, composed of more than 70 proteins and the RNA chaperone small nucleolar RNA (snoRNA) U3. Interacts with NOP2 and FBL.

The protein localises to the nucleus. Its subcellular location is the nucleolus. It is found in the cytoplasm. The protein resides in the nucleoplasm. In terms of biological role, involved in the early to middle stages of 60S ribosomal subunit biogenesis. Required for the biogenesis of box C/D snoRNAs such U3, U8 and U14 snoRNAs. Part of the small subunit (SSU) processome, first precursor of the small eukaryotic ribosomal subunit. During the assembly of the SSU processome in the nucleolus, many ribosome biogenesis factors, an RNA chaperone and ribosomal proteins associate with the nascent pre-rRNA and work in concert to generate RNA folding, modifications, rearrangements and cleavage as well as targeted degradation of pre-ribosomal RNA by the RNA exosome. Core component of box C/D small nucleolar ribonucleoprotein (snoRNP) complexes that function in methylation of multiple sites on ribosomal RNAs (rRNAs) and messenger RNAs (mRNAs). This Homo sapiens (Human) protein is Nucleolar protein 56.